The sequence spans 411 residues: Tyrosine--tRNA ligase (411 aa).

An L-tyrosine-binding site is contributed by tyrosine 34. The 'HIGH' region signature appears at 39–48 (CTATSLHIGS). L-tyrosine is bound by residues tyrosine 171 and glutamine 175. A 'KMSKS' region motif is present at residues 231 to 235 (KMGKT). Lysine 234 contributes to the ATP binding site. An S4 RNA-binding domain is found at 345–411 (ISAYELFHEA…GKKKHILVRV (67 aa)).

This sequence belongs to the class-I aminoacyl-tRNA synthetase family. TyrS type 1 subfamily. Homodimer.

Its subcellular location is the cytoplasm. It catalyses the reaction tRNA(Tyr) + L-tyrosine + ATP = L-tyrosyl-tRNA(Tyr) + AMP + diphosphate + H(+). Functionally, catalyzes the attachment of tyrosine to tRNA(Tyr) in a two-step reaction: tyrosine is first activated by ATP to form Tyr-AMP and then transferred to the acceptor end of tRNA(Tyr). The protein is Tyrosine--tRNA ligase of Rickettsia conorii (strain ATCC VR-613 / Malish 7).